The following is a 251-amino-acid chain: Protein CMS1 (251 aa).

Positions 1–37 (MSLDNDINTKKRKLQDDEKPRKKRKHKRPTRDDDADL) are disordered.

It belongs to the CMS1 family.

The protein localises to the nucleus. In terms of biological role, may play a role in the regulation of DNA replication and cell cycle control. This is Protein CMS1 (CSM1) from Chaetomium thermophilum (strain DSM 1495 / CBS 144.50 / IMI 039719) (Thermochaetoides thermophila).